A 1185-amino-acid polypeptide reads, in one-letter code: DNA-directed RNA polymerase subunit beta' (1185 aa).

The Zn(2+) site is built by C67, C69, C82, and C85. 3 residues coordinate Mg(2+): D457, D459, and D461. Zn(2+) is bound by residues C802, C876, C883, and C886.

It belongs to the RNA polymerase beta' chain family. As to quaternary structure, the RNAP catalytic core consists of 2 alpha, 1 beta, 1 beta' and 1 omega subunit. When a sigma factor is associated with the core the holoenzyme is formed, which can initiate transcription. Requires Mg(2+) as cofactor. Zn(2+) is required as a cofactor.

The enzyme catalyses RNA(n) + a ribonucleoside 5'-triphosphate = RNA(n+1) + diphosphate. In terms of biological role, DNA-dependent RNA polymerase catalyzes the transcription of DNA into RNA using the four ribonucleoside triphosphates as substrates. The sequence is that of DNA-directed RNA polymerase subunit beta' from Clostridium novyi (strain NT).